Consider the following 442-residue polypeptide: Lysosomal dipeptide transporter MFSD1 (442 aa).

Positions L8 to L9 match the Dileucine internalization motif motif. 10 consecutive transmembrane segments (helical) span residues L38–P58, T85–V105, A107–V127, L187–L207, L238–L258, A276–V296, I303–T323, L333–V353, F364–L384, and L390–L410.

This sequence belongs to the major facilitator superfamily. In terms of assembly, homodimer. Interacts with lysosomal protein GLMP (via lumenal domain); the interaction starts while both proteins are still in the endoplasmic reticulum and is required for stabilization of MFSD1 in lysosomes but has no direct effect on its targeting to lysosomes or transporter activity.

The protein resides in the lysosome membrane. It catalyses the reaction L-alpha-aminoacyl-L-arginine(out) = L-alpha-aminoacyl-L-arginine(in). It carries out the reaction L-arginyl-L-alpha-amino acid(out) = L-arginyl-L-alpha-amino acid(in). The enzyme catalyses L-arginyl-glycine(out) = L-arginyl-glycine(in). The catalysed reaction is L-alpha-aminoacyl-L-lysine(out) = L-alpha-aminoacyl-L-lysine(in). It catalyses the reaction L-aspartyl-L-lysine(out) = L-aspartyl-L-lysine(in). It carries out the reaction L-alanyl-L-lysine(out) = L-alanyl-L-lysine(in). The enzyme catalyses L-lysyl-L-alpha-amino acid(out) = L-lysyl-L-alpha-amino acid(in). The catalysed reaction is L-lysyl-L-alanine(out) = L-lysyl-L-alanine(in). It catalyses the reaction L-lysyl-L-lysine(out) = L-lysyl-L-lysine(in). It carries out the reaction L-lysyl-glycine(out) = L-lysyl-glycine(in). The enzyme catalyses L-alpha-aminoacyl-L-histidine(out) = L-alpha-aminoacyl-L-histidine(in). The catalysed reaction is L-histidyl-L-alpha-amino acid(out) = L-histidyl-L-alpha-amino acid(in). It catalyses the reaction L-histidyl-glycine(out) = L-histidyl-glycine(in). Functionally, lysosomal dipeptide uniporter that selectively exports lysine, arginine or histidine-containing dipeptides with a net positive charge from the lysosome lumen into the cytosol. Could play a role in a specific type of protein O-glycosylation indirectly regulating macrophages migration and tissue invasion. Also essential for liver homeostasis. The sequence is that of Lysosomal dipeptide transporter MFSD1 from Gallus gallus (Chicken).